We begin with the raw amino-acid sequence, 266 residues long: Undecaprenyl-diphosphatase (266 aa).

Helical transmembrane passes span 1–21 (MDTFQVIILALIQGLTEFLPI), 39–59 (QGLSFDVAVNTGSLLAVVMYF), 87–107 (WWIILATIPAVIVGFTAKGFI), 111–131 (LRNIEVIAATTIIFGLLLWWA), 144–164 (VGWKKALVIGLAQAMALIPGT), 183–203 (AAARFSFLMSVPVSLGAAILV), 218–238 (ALGLGIVVSFIAAYVCIHYFL), and 246–266 (MTPFVIYRLVLGAVLCGFIFL).

It belongs to the UppP family.

The protein resides in the cell inner membrane. The enzyme catalyses di-trans,octa-cis-undecaprenyl diphosphate + H2O = di-trans,octa-cis-undecaprenyl phosphate + phosphate + H(+). Its function is as follows. Catalyzes the dephosphorylation of undecaprenyl diphosphate (UPP). Confers resistance to bacitracin. In Shewanella piezotolerans (strain WP3 / JCM 13877), this protein is Undecaprenyl-diphosphatase.